A 472-amino-acid polypeptide reads, in one-letter code: Gamma-glutamylputrescine synthetase PuuA (472 aa).

The GS beta-grasp domain occupies 35-129 (PNTQYVDVLL…MLLTMVDEDG (95 aa)). Residues 136-472 (PRNVLNRLWQ…TEIEWMLKNA (337 aa)) enclose the GS catalytic domain.

This sequence belongs to the glutamine synthetase family. In terms of assembly, dodecamer. Mg(2+) is required as a cofactor. Requires Mn(2+) as cofactor.

It carries out the reaction putrescine + L-glutamate + ATP = gamma-L-glutamylputrescine + ADP + phosphate + H(+). The protein operates within amine and polyamine degradation; putrescine degradation; 4-aminobutanoate from putrescine: step 1/4. Involved in the breakdown of putrescine. Catalyzes the ATP-dependent gamma-glutamylation of putrescine, producing gamma-L-glutamylputrescine. Absolutely essential to utilize putrescine as both nitrogen and carbon sources and to decrease the toxicity of putrescine, which can lead to inhibition of cell growth and protein synthesis. In vitro is also able to use several diamines, and spermidine and spermine, instead of putrescine, but with a much lower activity, and cannot catalyze the gamma-glutamylation of ornithine or GABA. The protein is Gamma-glutamylputrescine synthetase PuuA of Escherichia coli (strain K12).